Consider the following 433-residue polypeptide: Dihydroorotase (433 aa).

The Zn(2+) site is built by histidine 63 and histidine 65. Substrate-binding positions include 65 to 67 (HLR) and asparagine 97. The Zn(2+) site is built by aspartate 155, histidine 182, and histidine 235. Asparagine 283 is a substrate binding site. Residue aspartate 310 coordinates Zn(2+). The active site involves aspartate 310. Histidine 314 is a substrate binding site.

This sequence belongs to the metallo-dependent hydrolases superfamily. DHOase family. Class I DHOase subfamily. It depends on Zn(2+) as a cofactor.

It carries out the reaction (S)-dihydroorotate + H2O = N-carbamoyl-L-aspartate + H(+). The protein operates within pyrimidine metabolism; UMP biosynthesis via de novo pathway; (S)-dihydroorotate from bicarbonate: step 3/3. Catalyzes the reversible cyclization of carbamoyl aspartate to dihydroorotate. The protein is Dihydroorotase of Anaeromyxobacter dehalogenans (strain 2CP-C).